The chain runs to 459 residues: LAS seventeen-binding protein 3 (459 aa).

Positions 219 to 403 (RPSNGGRGSF…APTSPSTSSP (185 aa)) are disordered. Position 227 is a phosphoserine (serine 227). The span at 229–242 (DDDEDDYYDDDDYY) shows a compositional bias: acidic residues. Over residues 243–262 (NDIPSSFSSTDASSTRPNTR) the composition is skewed to low complexity. Residues 289–300 (YSRNSRLAPTNS) are compositionally biased toward polar residues. Threonine 298 is subject to Phosphothreonine. Residues serine 300 and serine 303 each carry the phosphoserine modification. Positions 340–350 (DEYDDYDDDYE) are enriched in acidic residues. The span at 351-371 (SGYRRGNGRDRTKDREVDDLS) shows a compositional bias: basic and acidic residues. Polar residues predominate over residues 372–391 (NRFSKSRISSASTPQTSQGR). Position 393 is a phosphothreonine (threonine 393). Positions 393 to 403 (TAPTSPSTSSP) are enriched in low complexity. A phosphoserine mark is found at serine 397, serine 402, and serine 416. In terms of domain architecture, SH3 spans 400–459 (TSSPKAVALYSFAGEESGDLPFRKGDVITILKKSDSQNDWWTGRVNGREGIFPANYVELV).

It belongs to the SH3YL1 family. In terms of assembly, interacts with LAS17. Post-translationally, phosphorylation of Ser-397 is induced 2-fold in response to mating pheromone.

It is found in the cytoplasm. This chain is LAS seventeen-binding protein 3 (LSB3), found in Saccharomyces cerevisiae (strain YJM789) (Baker's yeast).